We begin with the raw amino-acid sequence, 141 residues long: MTSSAPTLPDVTIRNVSRHIQMSLMGKGEPPWLCRLQLEPLLQAMEEQQLGNLEARWEVEKHGNEVSGSTSREVWEDADFICPVLKQCTNPKLNENKNIHQAKECEKSPFLSLSPHQQWKPGLPRRNDALPTSLCLCCSEN.

This is an uncharacterized protein from Homo sapiens (Human).